The following is a 336-amino-acid chain: N-lysine methyltransferase KMT5A (336 aa).

A disordered region spans residues 1–112; that stretch reads MGRGKKMSKP…KPSEQRETEC (112 aa). The segment covering 67–93 has biased composition (basic and acidic residues); that stretch reads SVAHHESKCPGKPLTETRKKAEVEKKR. An SET domain is found at 200 to 321; the sequence is EGMKMDMITG…VGEELLYDYG (122 aa). S-adenosyl-L-methionine-binding positions include 210–212, tyrosine 255, and 282–283; these read KGR and NH.

It belongs to the class V-like SAM-binding methyltransferase superfamily. Histone-lysine methyltransferase family. PR/SET subfamily.

The protein localises to the nucleus. It is found in the chromosome. It catalyses the reaction L-lysyl(20)-[histone H4] + S-adenosyl-L-methionine = N(6)-methyl-L-lysyl(20)-[histone H4] + S-adenosyl-L-homocysteine + H(+). It carries out the reaction L-lysyl-[protein] + S-adenosyl-L-methionine = N(6)-methyl-L-lysyl-[protein] + S-adenosyl-L-homocysteine + H(+). In terms of biological role, protein-lysine N-methyltransferase that monomethylates both histones and non-histone proteins. Specifically monomethylates 'Lys-20' of histone H4 (H4K20me1). H4K20me1 is enriched during mitosis and represents a specific tag for epigenetic transcriptional repression. Mainly functions in euchromatin regions, thereby playing a central role in the silencing of euchromatic genes. Required for cell proliferation, probably by contributing to the maintenance of proper higher-order structure of DNA during mitosis. Involved in chromosome condensation and proper cytokinesis. Nucleosomes are preferred as substrate compared to free histones. Mediates monomethylation of p53/TP53 at 'Lys-382', leading to repress p53/TP53-target genes. Plays a negative role in TGF-beta response regulation and a positive role in cell migration. This Xenopus tropicalis (Western clawed frog) protein is N-lysine methyltransferase KMT5A.